We begin with the raw amino-acid sequence, 1033 residues long: MTARMISICGLVMALMMASVLASSSRFQRVPQSQSVVENESVKFECESTDSYSELHYDWLHNGHRIAYDKRVHQIGSNLHIEAVRRTEDVGNYVCIATNLASGAREASPPAKLSVIYLESASVQLLGSNRNELLLKCHVEGASGDLEPLEIEWYRNSEKLSTWKNVQLDQHRLIIRQPGSEDDGLYRCTASNAAGRVMSKQGYVYQSSVKCLPRLPRRKNEKMMESWDKQTFLCRGKRGGAAGLEALPAAPEDLRIVQGPIGQSIIKEGEPTALTCLYELPDELKNQRIQLRWRKDGKLLRQVELGGSAPIPGHSFDSGKDALLREDARLVLHKQNGTLSFASIIASDAGQYQCQLQLEAHAPINSSPGILEVIEQLKFVPQPTSKNLELDAVVAKVHCKAQGTPTPQVQWVRDGENTTLPDHVEVDANGTLIFRNVNSEHRGNYTCLATNSQGQINATVAINVVVTPKFSVPPVGPIETSEQGTVVMHCQAIGDPKPTIQWDKDLKYLSENNTDRERFRFLENGTLEIRNVQVEDEGSYGCTIGNSAGLKREDVQLVVKTTGDGFAPEESGGDGFLVTRAVLITMTVALAYIVLVVGLMLWCRYRRQARKARLNDLSTKEAGGDQPDVAGNGKGSEQEPCLSKQHNGHSKSRSKSSGDAQKSDDTACSQQSRASKKSAHIYEQLALPRSGLSELIQIGRGEFGDVFVGKLKATLVTSPSDKDADTEKQHSNSENGSGGSGSGSTTLSTLNEKRRSKTSMDDIEEIKEEEQDQHNQSGLEQLVLVKALNKVKDEQACQEFRRQLDLLRAISHKGVVRLFGLCREKDPHYMVLEYTDWGDLKQFLLATAGKVNTATAGSSSPPPLTTSQVLAVAYQIARGMDAIYRARFTHRDLATRNCVISSEFIVKVSYPALCKDKYSREYHKHRNTLLPIRWLAPECIQEDEYTTKSDIFAYGVVVWELFNQATKLPHEELTNEQVVQRSQAGSLEWSVAEATPDSLREILLSCWVSNPKERPSFSQLGAALSKAMQSAEK.

Positions 1–22 (MTARMISICGLVMALMMASVLA) are cleaved as a signal peptide. Residues 23 to 581 (SSSRFQRVPQ…GGDGFLVTRA (559 aa)) are Extracellular-facing. Ig-like C2-type domains follow at residues 25-114 (SRFQ…AKLS), 113-199 (LSVI…RVMS), 251-365 (PEDL…APIN), 368-463 (PGIL…VAIN), and 468-558 (PKFS…VQLV). N-linked (GlcNAc...) asparagine glycosylation occurs at asparagine 39. 4 disulfides stabilise this stretch: cysteine 46-cysteine 95, cysteine 137-cysteine 188, cysteine 276-cysteine 354, and cysteine 399-cysteine 447. Asparagine 336, asparagine 417, asparagine 429, asparagine 444, asparagine 457, asparagine 512, and asparagine 524 each carry an N-linked (GlcNAc...) asparagine glycan. A disulfide bridge connects residues cysteine 490 and cysteine 542. The chain crosses the membrane as a helical span at residues 582–602 (VLITMTVALAYIVLVVGLMLW). The Cytoplasmic portion of the chain corresponds to 603 to 1033 (CRYRRQARKA…LSKAMQSAEK (431 aa)). Disordered stretches follow at residues 617-679 (LSTK…KKSA) and 718-760 (SPSD…KTSM). Positions 655–673 (KSSGDAQKSDDTACSQQSR) are enriched in polar residues. Serine 678 is subject to Phosphoserine. A Protein kinase; inactive domain is found at 692 to 1028 (LSELIQIGRG…QLGAALSKAM (337 aa)). A compositionally biased stretch (basic and acidic residues) spans 720 to 731 (SDKDADTEKQHS).

The protein belongs to the protein kinase superfamily. Tyr protein kinase family. Insulin receptor subfamily. In terms of assembly, interacts with plexA; component of a receptor complex that mediates the repulsive signaling in response to Semaphorin ligands. In terms of tissue distribution, dynamically expressed during embryogenesis in several areas of the developing nervous system, including neurons and fasciculating axons. Expression in stage 7 embryos is seen in the anterior midgut primordia, cephalic furrow and along the germinal band. At stage 11, expression is in 15 stripes over the trunk region, and in the anterior and posterior midgut primordia. Stage 12 shows expression in the developing nervous system, procephalic lobe and maxillar bud. Stage 13 shows expression in the ventral cord, maxillar segment and in three regions of the gut. At stage 16 expression is preferentially detected throughout the nervous system, including the neuromers in the ventral cord and the supraesophageal ganglion (at protein level). In larva, expression is seen in developing R cells and is localized predominantly to R1-R6 growth cones.

Its subcellular location is the cell membrane. In terms of biological role, acts as a calcium-dependent, homophilic cell adhesion molecule that regulates neural recognition during the development of the nervous system. Component of the repulsive Plexin signaling response to regulate motor axon guidance at the embryonic stage. Also component of a receptor complex that is required in the adult visual system to innervate the lamina layer; specific targeting of R1-R6 axons. This chain is Tyrosine-protein kinase-like otk, found in Drosophila melanogaster (Fruit fly).